A 134-amino-acid polypeptide reads, in one-letter code: GSH-induced LITAF domain protein (134 aa).

An LITAF domain is found at 33-113 (DPLGAPIQQT…CGNKVADFEK (81 aa)). Positions 53 and 56 each coordinate Zn(2+). The tract at residues 68–88 (PGVAAVVACMMPFMLGFCFLC) is membrane-binding amphipathic helix. Zn(2+)-binding residues include C101 and C104.

Belongs to the CDIP1/LITAF family. In terms of assembly, interacts (via N- and C-terminal) with MIEL1 and LSD1 (via N-terminus).

It is found in the cell membrane. Its function is as follows. Acts as a membrane anchor, bringing other regulators of programmed cell death (PCD) to the plasma membrane. Negatively regulates hypersensitive cell death. The protein is GSH-induced LITAF domain protein of Arabidopsis thaliana (Mouse-ear cress).